The following is a 271-amino-acid chain: MSRVGILVLGPAGVGKSTFCNALITHIQSIGRRAHIVNLDPAAEPNEYEFTVDIRDLISLNDVMEEMELGPNGGLMYCFEFLLQNMDWLEEELGEFEDEYLIFDCPGQIELYTHVPVLPTIVKHLQRHMGFSLCACYILEAPFVLDRPKFFSGVLSAMSAMILLETPHINILSKMDLIKDEVPKRELKRFLNPDPLLMVDEANSQTNPKFHQLNLAITNMIEDFGMVQFLPLEAKNPDSVAAILSYLDDVTQWADNQEPKEPKVEEVEEEE.

GTP is bound at residue 13-18 (GVGKST). Residues 70 to 72 (GPN) carry the Gly-Pro-Asn (GPN)-loop; involved in dimer interface motif. 173-176 (SKMD) contacts GTP.

This sequence belongs to the GPN-loop GTPase family. As to quaternary structure, heterodimers with GPN1 or GPN2. Binds to RNA polymerase II (RNAPII).

In terms of biological role, small GTPase required for proper nuclear import of RNA polymerase II and III (RNAPII and RNAPIII). May act at an RNAP assembly step prior to nuclear import. This is GPN-loop GTPase 3 from Yarrowia lipolytica (strain CLIB 122 / E 150) (Yeast).